The primary structure comprises 75 residues: U6-lycotoxin-Ls1e (75 aa).

The signal sequence occupies residues 1–21 (MKLLLFTALVLVVISLIEVEA). Positions 22 to 25 (ENER) are excised as a propeptide.

The protein belongs to the neurotoxin 19 (CSTX) family. 06 (U6-Lctx) subfamily. Post-translationally, contains 4 disulfide bonds. As to expression, expressed by the venom gland.

The protein localises to the secreted. This is U6-lycotoxin-Ls1e from Lycosa singoriensis (Wolf spider).